The following is a 137-amino-acid chain: Large ribosomal subunit protein uL16 (137 aa).

Belongs to the universal ribosomal protein uL16 family. In terms of assembly, part of the 50S ribosomal subunit.

In terms of biological role, binds 23S rRNA and is also seen to make contacts with the A and possibly P site tRNAs. This chain is Large ribosomal subunit protein uL16, found in Spiroplasma kunkelii.